A 754-amino-acid chain; its full sequence is LON peptidase N-terminal domain and RING finger protein 2 (754 aa).

TPR repeat units follow at residues 23-58 and 59-91; these read IAQR…QPDR and GLCL…GALR. Positions 112 to 136 are disordered; that stretch reads PLSAENPGGEPEAPGEGGPAPEPRA. Over residues 115-125 the composition is skewed to low complexity; that stretch reads AENPGGEPEAP. TPR repeat units lie at residues 197-230, 231-264, and 266-298; these read LRRL…APDD, NSLL…EPLL, and KGHQ…NPEC. The disordered stretch occupies residues 398–439; it reads GLKRQFPDDVEDAPDLNAPGKIPKKDLSLQRSPNSETEESQG. The span at 426-439 shows a compositional bias: polar residues; it reads LQRSPNSETEESQG. Residues 447 to 483 form a TPR 6 repeat; sequence FECALCMRLLFEPVTTPCGHTFCLKCLERCLDHAPHC. The RING-type zinc finger occupies 449–487; the sequence is CALCMRLLFEPVTTPCGHTFCLKCLERCLDHAPHCPLCK. The 210-residue stretch at 528–737 folds into the Lon N-terminal domain; that stretch reads MSELSNLTRD…AIRRILVIIT (210 aa).

The protein is LON peptidase N-terminal domain and RING finger protein 2 (LONRF2) of Homo sapiens (Human).